Reading from the N-terminus, the 151-residue chain is Ribosome maturation factor RimP (151 aa).

The protein belongs to the RimP family.

The protein localises to the cytoplasm. Required for maturation of 30S ribosomal subunits. The chain is Ribosome maturation factor RimP from Shewanella baltica (strain OS223).